The chain runs to 140 residues: Ctenidin-1 (140 aa).

The N-terminal stretch at 1–19 (MKHLIPLIVMASVVLAVYA) is a signal peptide. Gly-138 carries the glycine amide modification.

It belongs to the glycine-rich peptide family. As to expression, expressed in hemocytes (at protein level).

Its subcellular location is the secreted. Its function is as follows. Antimicrobial protein with bacteriostatic activity against the Gram-negative bacterium E.coli, and very weak activity against the Gram-positive bacterium S.aureus. Lacks activity against the yeast C.albicans. This is Ctenidin-1 from Cupiennius salei (American wandering spider).